Reading from the N-terminus, the 614-residue chain is MVTPSLTAQADDKQARLKHLIKRLPNLPGVYKMLGKNGDILYVGKAKSLKSRVNSYFAKTIDHPKTRALVSRIHDIETIITRSETEALLLEQNLIKEHRPPYNVLLRDDKSYLYVFISADQPYPRLAYGRGKAKHQKGKFFGPFPSAHAAKETLVLMQKMFQMRQCTNTFFRQRKRPCLEYQIKRCRAPCVGLVSAEEYAADVQNTIRFLKGDSSDIHTTLIEKMEHSAEALDFEKAAFYRDQLSMLREVQSRQAVYTVQGEADIISIASQAGMTCVNVLTVRGGRVLGGKNYFPDVDSNEPINDNLSAFITSFYFQVTDDLPAEIIISHELPDQMALQEALSTYFEAKTVIKTNVREHRAEWLDLAKLNAHNALKTKLGDYLELHARFAALKEVLEPVSQSSIDTIECFDISHTMGEATIASCVVFDQGGARKRDYRQYAIHGVQDGDDYAAMAQAITRRYKKHPLPDVLLIDGGKGQLSMAKNVLTELGLLNDTLLIGVAKGEGRKAGLEVLHFIEHEPLDLPMDSKALHLIMNIRDEAHRFAITAHRKKRDKRRSSSVLEAIPGLGEKRRRDLLNHFGGLQQLLGASQQELEGVNGIGKVMANTIYKVLHE.

In terms of domain architecture, GIY-YIG spans 26–104; the sequence is NLPGVYKMLG…IKEHRPPYNV (79 aa). Residues 215-250 enclose the UVR domain; sequence SDIHTTLIEKMEHSAEALDFEKAAFYRDQLSMLREV.

It belongs to the UvrC family. In terms of assembly, interacts with UvrB in an incision complex.

Its subcellular location is the cytoplasm. The UvrABC repair system catalyzes the recognition and processing of DNA lesions. UvrC both incises the 5' and 3' sides of the lesion. The N-terminal half is responsible for the 3' incision and the C-terminal half is responsible for the 5' incision. The sequence is that of UvrABC system protein C from Psychrobacter sp. (strain PRwf-1).